Here is a 350-residue protein sequence, read N- to C-terminus: Holliday junction branch migration complex subunit RuvB (350 aa).

The segment at 1–184 (MSKTPERLVT…FGIPIRLEFY (184 aa)) is large ATPase domain (RuvB-L). ATP is bound by residues Leu-23, Arg-24, Gly-65, Lys-68, Thr-69, Thr-70, 131 to 133 (EDF), Arg-174, Tyr-184, and Arg-221. Thr-69 lines the Mg(2+) pocket. Residues 185–255 (TIEELERIVL…LADKALSLLD (71 aa)) form a small ATPAse domain (RuvB-S) region. The interval 258–350 (PIGLDQMDRR…GLFPDQSEED (93 aa)) is head domain (RuvB-H). Residues Arg-294, Arg-313, and Arg-318 each coordinate DNA.

The protein belongs to the RuvB family. As to quaternary structure, homohexamer. Forms an RuvA(8)-RuvB(12)-Holliday junction (HJ) complex. HJ DNA is sandwiched between 2 RuvA tetramers; dsDNA enters through RuvA and exits via RuvB. An RuvB hexamer assembles on each DNA strand where it exits the tetramer. Each RuvB hexamer is contacted by two RuvA subunits (via domain III) on 2 adjacent RuvB subunits; this complex drives branch migration. In the full resolvosome a probable DNA-RuvA(4)-RuvB(12)-RuvC(2) complex forms which resolves the HJ.

The protein resides in the cytoplasm. The enzyme catalyses ATP + H2O = ADP + phosphate + H(+). The RuvA-RuvB-RuvC complex processes Holliday junction (HJ) DNA during genetic recombination and DNA repair, while the RuvA-RuvB complex plays an important role in the rescue of blocked DNA replication forks via replication fork reversal (RFR). RuvA specifically binds to HJ cruciform DNA, conferring on it an open structure. The RuvB hexamer acts as an ATP-dependent pump, pulling dsDNA into and through the RuvAB complex. RuvB forms 2 homohexamers on either side of HJ DNA bound by 1 or 2 RuvA tetramers; 4 subunits per hexamer contact DNA at a time. Coordinated motions by a converter formed by DNA-disengaged RuvB subunits stimulates ATP hydrolysis and nucleotide exchange. Immobilization of the converter enables RuvB to convert the ATP-contained energy into a lever motion, pulling 2 nucleotides of DNA out of the RuvA tetramer per ATP hydrolyzed, thus driving DNA branch migration. The RuvB motors rotate together with the DNA substrate, which together with the progressing nucleotide cycle form the mechanistic basis for DNA recombination by continuous HJ branch migration. Branch migration allows RuvC to scan DNA until it finds its consensus sequence, where it cleaves and resolves cruciform DNA. The sequence is that of Holliday junction branch migration complex subunit RuvB from Beijerinckia indica subsp. indica (strain ATCC 9039 / DSM 1715 / NCIMB 8712).